The sequence spans 136 residues: Large ribosomal subunit protein uL16 (136 aa).

Belongs to the universal ribosomal protein uL16 family. In terms of assembly, part of the 50S ribosomal subunit.

Its function is as follows. Binds 23S rRNA and is also seen to make contacts with the A and possibly P site tRNAs. The polypeptide is Large ribosomal subunit protein uL16 (Pectobacterium atrosepticum (strain SCRI 1043 / ATCC BAA-672) (Erwinia carotovora subsp. atroseptica)).